We begin with the raw amino-acid sequence, 212 residues long: MARFGVDEAGKGPVLGSMFAAAVAGDPAAVPDGVADSKRLSADRRAELDDRVRASMRVGVAEVPVDRIDDPETDMNTLTVAAQADALGRVVADGMAGYVDAGDVNEQRFGRRVANRVAADVAVTAEHGADDEYDLVAAASIVAKVARDAHVDALAAAFDADIGSGYPSDSTTREFLAAYVREHGELPECARASWQTSRDALGAAEQSALDEF.

The 206-residue stretch at 1-206 (MARFGVDEAG…SRDALGAAEQ (206 aa)) folds into the RNase H type-2 domain. The a divalent metal cation site is built by Asp7, Glu8, and Asp100.

This sequence belongs to the RNase HII family. It depends on Mn(2+) as a cofactor. Mg(2+) serves as cofactor.

Its subcellular location is the cytoplasm. The enzyme catalyses Endonucleolytic cleavage to 5'-phosphomonoester.. Endonuclease that specifically degrades the RNA of RNA-DNA hybrids. The chain is Ribonuclease HII from Halobacterium salinarum (strain ATCC 29341 / DSM 671 / R1).